The sequence spans 224 residues: Urease accessory protein UreF (224 aa).

Belongs to the UreF family. UreD, UreF and UreG form a complex that acts as a GTP-hydrolysis-dependent molecular chaperone, activating the urease apoprotein by helping to assemble the nickel containing metallocenter of UreC. The UreE protein probably delivers the nickel.

Its subcellular location is the cytoplasm. In terms of biological role, required for maturation of urease via the functional incorporation of the urease nickel metallocenter. This chain is Urease accessory protein UreF, found in Ectopseudomonas mendocina (strain ymp) (Pseudomonas mendocina).